A 170-amino-acid chain; its full sequence is Large ribosomal subunit protein bL9 (170 aa).

A disordered region spans residues 149 to 170 (RTEEADAEESAAEEPAVEEAAE). Positions 153 to 170 (ADAEESAAEEPAVEEAAE) are enriched in acidic residues.

The protein belongs to the bacterial ribosomal protein bL9 family.

In terms of biological role, binds to the 23S rRNA. This chain is Large ribosomal subunit protein bL9, found in Oleidesulfovibrio alaskensis (strain ATCC BAA-1058 / DSM 17464 / G20) (Desulfovibrio alaskensis).